We begin with the raw amino-acid sequence, 283 residues long: Polyprenyl-phosphate transporter (283 aa).

Helical transmembrane passes span 27-47 (GTIA…SGIF), 51-71 (FWPS…AMGS), 85-105 (IPTM…LLKI), 112-132 (FTTK…VITL), 148-168 (TSLI…MLLP), 169-189 (GISG…MLAI), 197-217 (FAGL…FIIS), 230-250 (LMTF…VFPG), and 255-275 (IVMW…SLTL).

It belongs to the PopT family.

Its subcellular location is the cell membrane. Active in alkaline conditions. Flippase that catalyzes the transport of undecaprenyl phosphate (UndP) across the cytoplasmic membrane, from the external side to the cytoplasmic side. Is involved in UndP recycling during peptidoglycan synthesis. Necessary for peptidoglycan maintenance. In Staphylococcus aureus (strain NCTC 8325 / PS 47), this protein is Polyprenyl-phosphate transporter.